Reading from the N-terminus, the 90-residue chain is uncharacterized protein (90 aa).

This is an uncharacterized protein from Clostridium acetobutylicum (strain ATCC 824 / DSM 792 / JCM 1419 / IAM 19013 / LMG 5710 / NBRC 13948 / NRRL B-527 / VKM B-1787 / 2291 / W).